A 479-amino-acid polypeptide reads, in one-letter code: Ribosomal RNA small subunit methyltransferase F (479 aa).

S-adenosyl-L-methionine contacts are provided by residues 125-131 (AAAPGSK), glutamate 149, aspartate 176, and aspartate 194. Cysteine 247 acts as the Nucleophile in catalysis.

The protein belongs to the class I-like SAM-binding methyltransferase superfamily. RsmB/NOP family.

The protein localises to the cytoplasm. The enzyme catalyses cytidine(1407) in 16S rRNA + S-adenosyl-L-methionine = 5-methylcytidine(1407) in 16S rRNA + S-adenosyl-L-homocysteine + H(+). In terms of biological role, specifically methylates the cytosine at position 1407 (m5C1407) of 16S rRNA. The polypeptide is Ribosomal RNA small subunit methyltransferase F (Salmonella paratyphi B (strain ATCC BAA-1250 / SPB7)).